Here is a 68-residue protein sequence, read N- to C-terminus: DNA-directed RNA polymerase subunit omega (68 aa).

The protein belongs to the RNA polymerase subunit omega family. As to quaternary structure, the RNAP catalytic core consists of 2 alpha, 1 beta, 1 beta' and 1 omega subunit. When a sigma factor is associated with the core the holoenzyme is formed, which can initiate transcription.

It carries out the reaction RNA(n) + a ribonucleoside 5'-triphosphate = RNA(n+1) + diphosphate. Its function is as follows. Promotes RNA polymerase assembly. Latches the N- and C-terminal regions of the beta' subunit thereby facilitating its interaction with the beta and alpha subunits. The polypeptide is DNA-directed RNA polymerase subunit omega (Listeria monocytogenes serotype 4b (strain CLIP80459)).